The following is a 150-amino-acid chain: D-aminoacyl-tRNA deacylase (150 aa).

The Gly-cisPro motif, important for rejection of L-amino acids signature appears at 140-141; the sequence is GP.

It belongs to the DTD family. As to quaternary structure, homodimer.

It is found in the cytoplasm. The catalysed reaction is glycyl-tRNA(Ala) + H2O = tRNA(Ala) + glycine + H(+). The enzyme catalyses a D-aminoacyl-tRNA + H2O = a tRNA + a D-alpha-amino acid + H(+). Functionally, an aminoacyl-tRNA editing enzyme that deacylates mischarged D-aminoacyl-tRNAs. Also deacylates mischarged glycyl-tRNA(Ala), protecting cells against glycine mischarging by AlaRS. Acts via tRNA-based rather than protein-based catalysis; rejects L-amino acids rather than detecting D-amino acids in the active site. By recycling D-aminoacyl-tRNA to D-amino acids and free tRNA molecules, this enzyme counteracts the toxicity associated with the formation of D-aminoacyl-tRNA entities in vivo and helps enforce protein L-homochirality. The chain is D-aminoacyl-tRNA deacylase (DTD1) from Kluyveromyces lactis (strain ATCC 8585 / CBS 2359 / DSM 70799 / NBRC 1267 / NRRL Y-1140 / WM37) (Yeast).